Consider the following 388-residue polypeptide: Pregnancy-associated glycoprotein (388 aa).

A signal peptide spans 1–15 (MKWFGVLGLVTLSEC). In terms of domain architecture, Peptidase A1 spans 74 to 385 (YMGIISVGTP…DRENDRIGLA (312 aa)). Asp-92 is a catalytic residue. 2 disulfide bridges follow: Cys-105-Cys-110 and Cys-266-Cys-270. Asp-275 is a catalytic residue. An intrachain disulfide couples Cys-309 to Cys-344. Asn-356 is a glycosylation site (N-linked (GlcNAc...) asparagine).

This sequence belongs to the peptidase A1 family. In terms of tissue distribution, trophoblast and placental tissue.

It is found in the secreted. The protein localises to the extracellular space. In Equus caballus (Horse), this protein is Pregnancy-associated glycoprotein (PAG).